We begin with the raw amino-acid sequence, 430 residues long: UDP-glucuronate 4-epimerase 3 (430 aa).

Helical transmembrane passes span 29-49 and 90-110; these read SVAKLAFWSLVFVGLIFIFFY and GFSVLVTGAAGFVGTHVSAAL. 92–123 contributes to the NAD(+) binding site; sequence SVLVTGAAGFVGTHVSAALKRRGDGVLGLDNF. Catalysis depends on Tyr-242, which acts as the Proton acceptor.

It belongs to the NAD(P)-dependent epimerase/dehydratase family. In terms of assembly, homodimer. In terms of tissue distribution, in roots, leaves, siliques, flowers, pollen and stems.

Its subcellular location is the golgi apparatus. The protein resides in the golgi stack membrane. The enzyme catalyses UDP-alpha-D-glucuronate = UDP-alpha-D-galacturonate. In terms of biological role, involved in the synthesis of the negatively charged monosaccharide that forms the backbone of pectic cell wall components. The chain is UDP-glucuronate 4-epimerase 3 (GAE3) from Arabidopsis thaliana (Mouse-ear cress).